The primary structure comprises 533 residues: Glucose-6-phosphate isomerase (533 aa).

The Proton donor role is filled by E341. Active-site residues include H372 and K501.

The protein belongs to the GPI family.

It is found in the cytoplasm. The enzyme catalyses alpha-D-glucose 6-phosphate = beta-D-fructose 6-phosphate. It functions in the pathway carbohydrate biosynthesis; gluconeogenesis. It participates in carbohydrate degradation; glycolysis; D-glyceraldehyde 3-phosphate and glycerone phosphate from D-glucose: step 2/4. In terms of biological role, catalyzes the reversible isomerization of glucose-6-phosphate to fructose-6-phosphate. This is Glucose-6-phosphate isomerase from Cereibacter sphaeroides (strain ATCC 17023 / DSM 158 / JCM 6121 / CCUG 31486 / LMG 2827 / NBRC 12203 / NCIMB 8253 / ATH 2.4.1.) (Rhodobacter sphaeroides).